Reading from the N-terminus, the 196-residue chain is Peroxiredoxin TSA1 (196 aa).

The Thioredoxin domain maps to alanine 3 to tryptophan 161. Lysine 14 is covalently cross-linked (Glycyl lysine isopeptide (Lys-Gly) (interchain with G-Cter in ubiquitin)). Threonine 45–valine 47 contacts substrate. Cysteine 48 serves as the catalytic Cysteine sulfenic acid (-SOH) intermediate. A Glycyl lysine isopeptide (Lys-Gly) (interchain with G-Cter in ubiquitin) cross-link involves residue lysine 89. Arginine 124 contributes to the substrate binding site. Lysine 132 participates in a covalent cross-link: Glycyl lysine isopeptide (Lys-Gly) (interchain with G-Cter in ubiquitin). Threonine 174 carries the post-translational modification Phosphothreonine.

It belongs to the peroxiredoxin family. AhpC/Prx1 subfamily. As to quaternary structure, homodimer; disulfide-linked, upon oxidation. Interacts with YAP1 via transient disulfide linkages. In terms of processing, the enzyme can be inactivated by further oxidation of the cysteine sulfenic acid (C(P)-SOH) to sulphinic acid (C(P)-SO2H) instead of its condensation to a disulfide bond. It can be reactivated by forming a transient disulfide bond with sulfiredoxin SRX1, which reduces the cysteine sulfinic acid in an ATP- and Mg-dependent manner.

The protein resides in the cytoplasm. The catalysed reaction is a hydroperoxide + [thioredoxin]-dithiol = an alcohol + [thioredoxin]-disulfide + H2O. Functionally, thiol-specific peroxidase that catalyzes the reduction of hydrogen peroxide and organic hydroperoxides to water and alcohols, respectively. Plays a role in cell protection against oxidative stress by detoxifying peroxides and as sensor of hydrogen peroxide-mediated signaling events. Protects the cell against the oxidative stress caused by nascent-protein misfolding and aggregation. Relays hydrogen peroxide as a signal to the transcription factor YAP1 by inducing the formation of intramolecular disulfide bonds in YAP1, which causes its nuclear accumulation and activation. Can act alternatively as peroxidase and molecular chaperone. Oxidative stress and heat shock exposure cause a reversible shift of the protein structure from low MW species to high MW complexes, triggering a peroxidase-to-chaperone functional switch. The chaperone function of the protein enhances resistance to heat shock. The polypeptide is Peroxiredoxin TSA1 (Saccharomyces cerevisiae (strain ATCC 204508 / S288c) (Baker's yeast)).